Reading from the N-terminus, the 209-residue chain is 8-oxoguanine DNA glycosylase/AP lyase (209 aa).

Residues Lys132 and Asp150 contribute to the active site.

It belongs to the type-2 OGG1 family.

The enzyme catalyses 2'-deoxyribonucleotide-(2'-deoxyribose 5'-phosphate)-2'-deoxyribonucleotide-DNA = a 3'-end 2'-deoxyribonucleotide-(2,3-dehydro-2,3-deoxyribose 5'-phosphate)-DNA + a 5'-end 5'-phospho-2'-deoxyribonucleoside-DNA + H(+). Functionally, catalyzes the excision of an oxidatively damaged form of guanine (7,8-dihydro-8-oxoguanine = 8-oxoG) from DNA. Also cleaves the DNA backbone at apurinic/apyrimidinic sites (AP sites). The polypeptide is 8-oxoguanine DNA glycosylase/AP lyase (Picrophilus torridus (strain ATCC 700027 / DSM 9790 / JCM 10055 / NBRC 100828 / KAW 2/3)).